Consider the following 538-residue polypeptide: Atos homolog protein B (538 aa).

Disordered regions lie at residues 1-99 (MRHV…PSTV), 165-185 (QGGQ…QLHT), and 199-270 (KSPV…GTLG). A compositionally biased stretch (pro residues) spans 227–238 (HTPPGPGPPGPC). Ser254 and Ser255 each carry phosphoserine. Positions 348-430 (LLGNFEESLL…VPKVGTIQVT (83 aa)) are required for macropage invasion. The interval 436–444 (QTVVKMFLV) is transactivation domain 1 (TAD1).

Belongs to the ATOS family.

It is found in the nucleus. Transcription regulator that syncronizes transcriptional and translational programs to promote macrophage invasion of tissues. The chain is Atos homolog protein B from Mus musculus (Mouse).